The chain runs to 233 residues: Large ribosomal subunit protein uL1 (233 aa).

It belongs to the universal ribosomal protein uL1 family. As to quaternary structure, part of the 50S ribosomal subunit.

In terms of biological role, binds directly to 23S rRNA. The L1 stalk is quite mobile in the ribosome, and is involved in E site tRNA release. Its function is as follows. Protein L1 is also a translational repressor protein, it controls the translation of the L11 operon by binding to its mRNA. This is Large ribosomal subunit protein uL1 from Vibrio parahaemolyticus serotype O3:K6 (strain RIMD 2210633).